The primary structure comprises 426 residues: 6-Hydroxy-7-prenyldeoxybrevianamide E synthase notC (426 aa).

A substrate-binding site is contributed by glutamate 94. Dimethylallyl diphosphate contacts are provided by arginine 105, lysine 191, and tyrosine 193. Residue tyrosine 195 participates in substrate binding. Dimethylallyl diphosphate is bound by residues lysine 267, tyrosine 269, glutamine 352, tyrosine 354, tyrosine 418, and tyrosine 422.

This sequence belongs to the tryptophan dimethylallyltransferase family.

The catalysed reaction is 6-hydroxydeoxybrevianamide E + dimethylallyl diphosphate = notoamide S + diphosphate. It participates in alkaloid biosynthesis. Addition of 5 mM Mg(2+), Ca(2+) or Mn(2+) slightly enhances catalysis (about 100-120%). Significant reduction of enzyme activity (2%-35%) is observed with Cu(2+), Zn(2+), Fe(2+), or Sn(2+) (5 mM). Its function is as follows. Prenyltransferase; part of the gene cluster that mediates the biosynthesis of notoamide, a fungal indole alkaloid that belongs to a family of natural products containing a characteristic bicyclo[2.2.2]diazaoctane core. The first step of notoamide biosynthesis involves coupling of L-proline and L-tryptophan by the bimodular NRPS notE, to produce cyclo-L-tryptophan-L-proline called brevianamide F. The reverse prenyltransferase notF then acts as a deoxybrevianamide E synthase and converts brevianamide F to deoxybrevianamide E via reverse prenylation at C-2 of the indole ring leading to the bicyclo[2.2.2]diazaoctane core. Deoxybrevianamide E is further hydroxylated at C-6 of the indole ring, likely catalyzed by the cytochrome P450 monooxygenase notG, to yield 6-hydroxy-deoxybrevianamide E. 6-hydroxy-deoxybrevianamide E is a specific substrate of the prenyltransferase notC for normal prenylation at C-7 to produce 6-hydroxy-7-prenyl-deoxybrevianamide, also called notoamide S. As the proposed pivotal branching point in notoamide biosynthesis, notoamide S can be diverted to notoamide E through an oxidative pyran ring closure putatively catalyzed by either notH cytochrome P450 monooxygenase or the notD FAD-linked oxidoreductase. This step would be followed by an indole 2,3-epoxidation-initiated pinacol-like rearrangement catalyzed by the notB FAD-dependent monooxygenase leading to the formation of notoamide C and notoamide D. On the other hand notoamide S is converted to notoamide T by notH (or notD), a bifunctional oxidase that also functions as the intramolecular Diels-Alderase responsible for generation of (+)-notoamide T. To generate antipodal (-)-notoaminide T, notH' (or notD') in Aspergillus versicolor is expected to catalyze a Diels-Alder reaction leading to the opposite stereochemistry. The remaining oxidoreductase notD (or notH) likely catalyzes the oxidative pyran ring formation to yield (+)-stephacidin A. The FAD-dependent monooxygenase notI is highly similar to notB and is predicted to catalyze a similar conversion from (+)-stephacidin A to (-)-notoamide B via the 2,3-epoxidation of (+)-stephacidin A followed by a pinacol-type rearrangement. Finally, it remains unclear which enzyme could be responsible for the final hydroxylation steps leading to notoamide A and sclerotiamide. This Aspergillus sp. (strain MF297-2) protein is 6-Hydroxy-7-prenyldeoxybrevianamide E synthase notC.